Consider the following 155-residue polypeptide: Dau c 1 isoallergen Dau c 1.0401 (155 aa).

Belongs to the BetVI family. Monomer. Expressed in roots (at protein level). Expressed in roots.

The polypeptide is Dau c 1 isoallergen Dau c 1.0401 (Daucus carota subsp. sativus (Carrot)).